Here is a 521-residue protein sequence, read N- to C-terminus: Acetylcholine receptor subunit delta (521 aa).

Residues 1 to 21 (MAWIWISLLLPILIYFPGCFS) form the signal peptide. At 22–247 (ESEEERLLNH…ITFYLIIERK (226 aa)) the chain is on the extracellular side. 2 N-linked (GlcNAc...) asparagine glycosylation sites follow: asparagine 53 and asparagine 164. The cysteines at positions 151 and 165 are disulfide-linked. The next 3 membrane-spanning stretches (helical) occupy residues 248-272 (PLFY…VFYL), 280-297 (MTLA…LLLI), and 314-335 (YLMF…VLNL). The Cytoplasmic portion of the chain corresponds to 336–475 (HFRTPSTHAI…WYRIARTVDR (140 aa)). At tyrosine 394 the chain carries Phosphotyrosine; by Tyr-kinases. A helical membrane pass occupies residues 476-494 (LCLFLVTPVMIIGTLWIFL).

This sequence belongs to the ligand-gated ion channel (TC 1.A.9) family. Acetylcholine receptor (TC 1.A.9.1) subfamily. Pentamer of two alpha chains, and one each of the beta, delta, and gamma (in immature muscle) or epsilon (in mature muscle) chains.

The protein localises to the postsynaptic cell membrane. It is found in the cell membrane. The catalysed reaction is K(+)(in) = K(+)(out). The enzyme catalyses Na(+)(in) = Na(+)(out). In terms of biological role, after binding acetylcholine, the AChR responds by an extensive change in conformation that affects all subunits and leads to opening of an ion-conducting channel across the plasma membrane. The protein is Acetylcholine receptor subunit delta (chrnd) of Xenopus laevis (African clawed frog).